The sequence spans 685 residues: Phenoloxidase subunit 1 (685 aa).

Positions 1 to 51 (MSDAKNNLLLFFDRPSEPCFMQKGEENAVFEIPDNYYPEKYQRVSNAIGNR) are excised as a propeptide. Asn184 carries an N-linked (GlcNAc...) asparagine glycan. Cu cation contacts are provided by His209, His213, and His239. Residues Asn254 and Asn324 are each glycosylated (N-linked (GlcNAc...) asparagine). Glu351 acts as the Proton acceptor in catalysis. Cu cation is bound by residues His366, His370, and His406. 2 N-linked (GlcNAc...) asparagine glycosylation sites follow: Asn491 and Asn540. Intrachain disulfides connect Cys581-Cys623 and Cys583-Cys630.

Heterodimer. Requires Cu(2+) as cofactor. The N-terminus is blocked. In terms of tissue distribution, synthesized by hemocytes and released into the hemolymph plasma.

It localises to the secreted. It carries out the reaction 2 L-dopa + O2 = 2 L-dopaquinone + 2 H2O. It catalyses the reaction L-tyrosine + O2 = L-dopaquinone + H2O. Functionally, this is a copper-containing oxidase that functions in the formation of pigments such as melanins and other polyphenolic compounds. Catalyzes the rate-limiting conversions of tyrosine to DOPA, DOPA to DOPA-quinone and possibly 5,6 dihydroxyindole to indole-5'6 quinone. This chain is Phenoloxidase subunit 1, found in Bombyx mori (Silk moth).